The sequence spans 141 residues: MAKKLVAVVKLAIQAGKATPAPPIGPALGQHGVNIMAFCKEYNAKTADQAGMVVPVEISIFEDRSFTFVLKTPPASVLIKKALGIESGSSEPHKTKVGSLTRAQLRQIAEQKLPDLNAHDVEAAMKIIAGTARSMGVTVVD.

This sequence belongs to the universal ribosomal protein uL11 family. As to quaternary structure, part of the ribosomal stalk of the 50S ribosomal subunit. Interacts with L10 and the large rRNA to form the base of the stalk. L10 forms an elongated spine to which L12 dimers bind in a sequential fashion forming a multimeric L10(L12)X complex. In terms of processing, one or more lysine residues are methylated.

Forms part of the ribosomal stalk which helps the ribosome interact with GTP-bound translation factors. The polypeptide is Large ribosomal subunit protein uL11 (Synechococcus sp. (strain JA-2-3B'a(2-13)) (Cyanobacteria bacterium Yellowstone B-Prime)).